Here is a 132-residue protein sequence, read N- to C-terminus: Large ribosomal subunit protein uL14 (132 aa).

Belongs to the universal ribosomal protein uL14 family. In terms of assembly, part of the 50S ribosomal subunit. Forms a cluster with proteins L3 and L24e, part of which may contact the 16S rRNA in 2 intersubunit bridges.

Functionally, binds to 23S rRNA. Forms part of two intersubunit bridges in the 70S ribosome. The polypeptide is Large ribosomal subunit protein uL14 (Methanobrevibacter smithii (strain ATCC 35061 / DSM 861 / OCM 144 / PS)).